We begin with the raw amino-acid sequence, 118 residues long: Small ribosomal subunit protein uS13 (118 aa).

The disordered stretch occupies residues 91 to 118 (HRRGLPVRGQRTKTNARTRKGPRKPIKK).

Belongs to the universal ribosomal protein uS13 family. Part of the 30S ribosomal subunit. Forms a loose heterodimer with protein S19. Forms two bridges to the 50S subunit in the 70S ribosome.

Functionally, located at the top of the head of the 30S subunit, it contacts several helices of the 16S rRNA. In the 70S ribosome it contacts the 23S rRNA (bridge B1a) and protein L5 of the 50S subunit (bridge B1b), connecting the 2 subunits; these bridges are implicated in subunit movement. Contacts the tRNAs in the A and P-sites. The sequence is that of Small ribosomal subunit protein uS13 from Photorhabdus laumondii subsp. laumondii (strain DSM 15139 / CIP 105565 / TT01) (Photorhabdus luminescens subsp. laumondii).